The sequence spans 212 residues: Nuclear transcription factor Y subunit C-7 (212 aa).

A compositionally biased stretch (polar residues) spans 1 to 10 (MEENNGNNNH). Disordered stretches follow at residues 1–23 (MEEN…LPPP) and 190–212 (EWPA…SGGN).

The protein belongs to the NFYC/HAP5 subunit family. In terms of assembly, heterotrimeric transcription factor composed of three components, NF-YA, NF-YB and NF-YC. NF-YB and NF-YC must interact and dimerize for NF-YA association and DNA binding. As to expression, expressed in flowers.

Its subcellular location is the nucleus. Its function is as follows. Stimulates the transcription of various genes by recognizing and binding to a CCAAT motif in promoters. This chain is Nuclear transcription factor Y subunit C-7 (NFYC7), found in Arabidopsis thaliana (Mouse-ear cress).